Here is a 1097-residue protein sequence, read N- to C-terminus: Chitin synthase 2 (1097 aa).

The segment at 1-46 (MAGYGHSTAGGFGSGSGSGPPGPQYMLPQYDEGDDPDADATPAGQG) is disordered. Topologically, residues 1–748 (MAGYGHSTAG…HVEFLYHLLQ (748 aa)) are extracellular. Residues 8-19 (TAGGFGSGSGSG) show a composition bias toward gly residues. An N-linked (GlcNAc...) asparagine glycan is attached at Asn-55. 2 disordered regions span residues 148-217 (SGHG…YPRY) and 259-322 (SSQI…RPPQ). Residues 284–296 (STTYSSNTGTSAS) are compositionally biased toward polar residues. Residues 299-313 (DKFEHYGPIPEEGKH) are compositionally biased toward basic and acidic residues. 2 N-linked (GlcNAc...) asparagine glycosylation sites follow: Asn-416 and Asn-424. The chain crosses the membrane as a helical span at residues 749–769 (LLFTYFSLANFYLAFYFIAGG). Topologically, residues 770-786 (LADPHVDPFNSDGHVAR) are cytoplasmic. The chain crosses the membrane as a helical span at residues 787–807 (IIFNILRYVCVLLICTQFILS). The Extracellular segment spans residues 808–821 (LGNRPQGAKRMYLA). Residues 822–842 (SMIIYAVIMVYTTFATIFIVV) traverse the membrane as a helical segment. Residues 843 to 865 (RQIQPSQKSDDKPDLELGNNVFT) are Cytoplasmic-facing. The helical transmembrane segment at 866–886 (NLIVSVASTLGLYFVMSFLYL) threads the bilayer. The Extracellular segment spans residues 887–894 (DPWHMFTS). The chain crosses the membrane as a helical span at residues 895–915 (AIQYFVLLPSYICTLQIYAFC). Over 916–993 (NTHDVTWGTK…QDYYKSVRTY (78 aa)) the chain is Cytoplasmic. The chain crosses the membrane as a helical span at residues 994 to 1014 (MVVSWMVANATLAMAVSEAYG). Topologically, residues 1015–1025 (DSEIGDNFYLR) are extracellular. A helical membrane pass occupies residues 1026–1046 (FILWAVAALALFRALGSTTFA). Residues 1047 to 1097 (AINLVSALVEGRVRLRLNMKGFRWIKEKWGDADVKGKFEGLGDRARGLARR) lie on the Cytoplasmic side of the membrane.

It belongs to the chitin synthase family.

It localises to the cell membrane. The enzyme catalyses [(1-&gt;4)-N-acetyl-beta-D-glucosaminyl](n) + UDP-N-acetyl-alpha-D-glucosamine = [(1-&gt;4)-N-acetyl-beta-D-glucosaminyl](n+1) + UDP + H(+). Polymerizes chitin, a structural polymer of the cell wall and septum, by transferring the sugar moiety of UDP-GlcNAc to the non-reducing end of the growing chitin polymer. The chain is Chitin synthase 2 (chs-2) from Neurospora crassa (strain ATCC 24698 / 74-OR23-1A / CBS 708.71 / DSM 1257 / FGSC 987).